Here is a 509-residue protein sequence, read N- to C-terminus: H/ACA ribonucleoprotein complex subunit DKC1 (509 aa).

The tract at residues 1–25 (MADAEAAMTFPKKHKKKKERKPLPE) is disordered. At A2 the chain carries N-acetylalanine. The tract at residues 2-22 (ADAEAAMTFPKKHKKKKERKP) is nucleolar localization. Positions 11–20 (PKKHKKKKER) are enriched in basic residues. Residues K21, K40, and K44 each participate in a glycyl lysine isopeptide (Lys-Gly) (interchain with G-Cter in SUMO2) cross-link. The Nucleophile role is filled by D126. A Glycyl lysine isopeptide (Lys-Gly) (interchain with G-Cter in SUMO2) cross-link involves residue K192. In terms of domain architecture, PUA spans 297–372 (HKRLVMKDSA…VVAKIKRVIM (76 aa)). The tract at residues 381–509 (WGLGPKASQK…KARAAEELSG (129 aa)) is disordered. The residue at position 388 (S388) is a Phosphoserine. Glycyl lysine isopeptide (Lys-Gly) (interchain with G-Cter in SUMO2) cross-links involve residues K395 and K425. The segment covering 416–425 (DYVDYSDSSK) has biased composition (basic and acidic residues). The tract at residues 447–509 (KRKRDSDSDA…KARAAEELSG (63 aa)) is nuclear and nucleolar localization. Phosphoserine occurs at positions 452 and 454. The residue at position 460 (T460) is a Phosphothreonine. Positions 466–475 (RVKKEKKKKK) are enriched in basic residues. Residues 481 to 490 (GEEAAEDGDG) show a composition bias toward acidic residues. S508 carries the post-translational modification Phosphoserine.

It belongs to the pseudouridine synthase TruB family. In terms of assembly, part of the H/ACA small nucleolar ribonucleoprotein (H/ACA snoRNP) complex, which contains NHP2/NOLA2, GAR1/NOLA1, NOP10/NOLA3, and DKC1/NOLA4, which is presumed to be the catalytic subunit. The complex contains a stable core formed by binding of one or two NOP10-DKC1 heterodimers to NHP2; GAR1 subsequently binds to this core via DKC1. The complex binds a box H/ACA small nucleolar RNA (snoRNA), which may target the specific site of modification within the RNA substrate. During assembly, the complex contains NAF1 instead of GAR1/NOLA1. The complex also interacts with TERC, which contains a 3'-terminal domain related to the box H/ACA snoRNAs. Specific interactions with snoRNAs or TERC are mediated by GAR1 and NHP2. Associates with NOLC1/NOPP140. H/ACA snoRNPs interact with the SMN complex, consisting of SMN1 or SMN2, GEMIN2/SIP1, DDX20/GEMIN3, and GEMIN4. This is mediated by interaction between GAR1 and SMN1 or SMN2. The SMN complex may be required for correct assembly of the H/ACA snoRNP complex. Component of the telomerase holoenzyme complex composed of one molecule of TERT, one molecule of WRAP53/TCAB1, two molecules of H/ACA ribonucleoprotein complex subunits DKC1, NOP10, NHP2 and GAR1, and a telomerase RNA template component (TERC). The telomerase holoenzyme complex is associated with TEP1, SMG6/EST1A and POT1. Interacts with SHQ1; this interaction may lead to the stabilization of DKC1, from the time of its synthesis until its association with NOP10, NHP2, and NAF1 at the nascent H/ACA RNA. Interacts with HMBOX1. Interacts with DHX36.

It localises to the nucleus. Its subcellular location is the nucleolus. The protein localises to the cajal body. The catalysed reaction is uridine in 5S rRNA = pseudouridine in 5S rRNA. Its function is as follows. Catalytic subunit of H/ACA small nucleolar ribonucleoprotein (H/ACA snoRNP) complex, which catalyzes pseudouridylation of rRNA. This involves the isomerization of uridine such that the ribose is subsequently attached to C5, instead of the normal N1. Each rRNA can contain up to 100 pseudouridine ('psi') residues, which may serve to stabilize the conformation of rRNAs. Required for ribosome biogenesis and telomere maintenance. Also required for correct processing or intranuclear trafficking of TERC, the RNA component of the telomerase reverse transcriptase (TERT) holoenzyme. This is H/ACA ribonucleoprotein complex subunit DKC1 (Dkc1) from Rattus norvegicus (Rat).